Here is a 150-residue protein sequence, read N- to C-terminus: Large ribosomal subunit protein bL9 (150 aa).

Belongs to the bacterial ribosomal protein bL9 family.

Functionally, binds to the 23S rRNA. The protein is Large ribosomal subunit protein bL9 of Paraburkholderia xenovorans (strain LB400).